A 312-amino-acid polypeptide reads, in one-letter code: Olfactory receptor 2T10 (312 aa).

The Extracellular segment spans residues 1 to 25 (MRLANQTLGGDFFLLGIFSQISHPG). The N-linked (GlcNAc...) asparagine glycan is linked to asparagine 5. The helical transmembrane segment at 26–49 (RLCLLIFSIFLMAVSWNITLILLI) threads the bilayer. Residues 50-57 (HIDSSLHT) are Cytoplasmic-facing. Residues 58–79 (PMYFFINQLSLIDLTYISVTVP) form a helical membrane-spanning segment. At 80–100 (KMLVNQLAKDKTISVLGCGTQ) the chain is on the extracellular side. Cysteine 97 and cysteine 189 are joined by a disulfide. A helical transmembrane segment spans residues 101–120 (MYFYLQLGGAECCLLAAMAY). The Cytoplasmic segment spans residues 121 to 139 (DRYVAICHPLRYSVLMSHR). Residues 140 to 158 (VCLLLASGCWFVGSVDGFM) traverse the membrane as a helical segment. Over 159 to 195 (LTPIAMSFPFCRSHEIQHFFCEVPAVLKLSCSDTSLY) the chain is Extracellular. The chain crosses the membrane as a helical span at residues 196 to 219 (KIFMYLCCVIMLLIPVTVISVSYY). The Cytoplasmic portion of the chain corresponds to 220–236 (YIILTIHKMNSVEGRKK). The helical transmembrane segment at 237-259 (AFTTCSSHITVVSLFYGAAIYNY) threads the bilayer. Topologically, residues 260 to 272 (MLPSSYQTPEKDM) are extracellular. A helical membrane pass occupies residues 273-292 (MSSFFYTILTPVLNPIIYSF). Residues 293–312 (RNKDVTRALKKMLSVQKPPY) lie on the Cytoplasmic side of the membrane.

This sequence belongs to the G-protein coupled receptor 1 family.

The protein localises to the cell membrane. Functionally, odorant receptor. In Homo sapiens (Human), this protein is Olfactory receptor 2T10 (OR2T10).